A 166-amino-acid chain; its full sequence is Crossover junction endodeoxyribonuclease RuvC (166 aa).

Residues Asp7, Glu67, and Asp140 contribute to the active site. Residues Asp7, Glu67, and Asp140 each coordinate Mg(2+).

This sequence belongs to the RuvC family. In terms of assembly, homodimer which binds Holliday junction (HJ) DNA. The HJ becomes 2-fold symmetrical on binding to RuvC with unstacked arms; it has a different conformation from HJ DNA in complex with RuvA. In the full resolvosome a probable DNA-RuvA(4)-RuvB(12)-RuvC(2) complex forms which resolves the HJ. It depends on Mg(2+) as a cofactor.

It is found in the cytoplasm. The catalysed reaction is Endonucleolytic cleavage at a junction such as a reciprocal single-stranded crossover between two homologous DNA duplexes (Holliday junction).. Its function is as follows. The RuvA-RuvB-RuvC complex processes Holliday junction (HJ) DNA during genetic recombination and DNA repair. Endonuclease that resolves HJ intermediates. Cleaves cruciform DNA by making single-stranded nicks across the HJ at symmetrical positions within the homologous arms, yielding a 5'-phosphate and a 3'-hydroxyl group; requires a central core of homology in the junction. The consensus cleavage sequence is 5'-(A/T)TT(C/G)-3'. Cleavage occurs on the 3'-side of the TT dinucleotide at the point of strand exchange. HJ branch migration catalyzed by RuvA-RuvB allows RuvC to scan DNA until it finds its consensus sequence, where it cleaves and resolves the cruciform DNA. The chain is Crossover junction endodeoxyribonuclease RuvC from Ruminiclostridium cellulolyticum (strain ATCC 35319 / DSM 5812 / JCM 6584 / H10) (Clostridium cellulolyticum).